Consider the following 226-residue polypeptide: Phosphoglycolate phosphatase (226 aa).

Catalysis depends on Asp9, which acts as the Nucleophile. Mg(2+)-binding residues include Asp9 and Asp11. Lys150 is a binding site for substrate. 2 residues coordinate Mg(2+): Asp173 and Asp177.

Belongs to the archaeal SPP-like hydrolase family. Mg(2+) serves as cofactor.

The enzyme catalyses 2-phosphoglycolate + H2O = glycolate + phosphate. In terms of biological role, catalyzes the dephosphorylation of 2-phosphoglycolate. The polypeptide is Phosphoglycolate phosphatase (Methanosarcina mazei (strain ATCC BAA-159 / DSM 3647 / Goe1 / Go1 / JCM 11833 / OCM 88) (Methanosarcina frisia)).